Here is an 80-residue protein sequence, read N- to C-terminus: Acyl carrier protein (80 aa).

The Carrier domain occupies 4–79 (DEIFSKVRSI…DVVNFIKKRK (76 aa)). Ser-39 carries the O-(pantetheine 4'-phosphoryl)serine modification.

The protein belongs to the acyl carrier protein (ACP) family. In terms of processing, 4'-phosphopantetheine is transferred from CoA to a specific serine of apo-ACP by AcpS. This modification is essential for activity because fatty acids are bound in thioester linkage to the sulfhydryl of the prosthetic group.

Its subcellular location is the cytoplasm. It participates in lipid metabolism; fatty acid biosynthesis. Carrier of the growing fatty acid chain in fatty acid biosynthesis. The chain is Acyl carrier protein from Borreliella burgdorferi (strain ATCC 35210 / DSM 4680 / CIP 102532 / B31) (Borrelia burgdorferi).